The primary structure comprises 185 residues: Ribosome-recycling factor (185 aa).

Belongs to the RRF family.

Its subcellular location is the cytoplasm. Its function is as follows. Responsible for the release of ribosomes from messenger RNA at the termination of protein biosynthesis. May increase the efficiency of translation by recycling ribosomes from one round of translation to another. The protein is Ribosome-recycling factor of Ectopseudomonas mendocina (strain ymp) (Pseudomonas mendocina).